Consider the following 174-residue polypeptide: Type II secretion system protein M (174 aa).

Topologically, residues 1 to 32 (MKVMTQFHERLRAQAETSQLAIRWRGLPARDR) are cytoplasmic. A helical transmembrane segment spans residues 33-52 (LALLWLGAFLLLVVLYLALW). The Periplasmic segment spans residues 53–174 (RPAERHLQSA…VSARLSLRVE (122 aa)).

It belongs to the GSP M family. As to quaternary structure, type II secretion system is composed of four main components: the outer membrane complex, the inner membrane complex, the cytoplasmic secretion ATPase and the periplasm-spanning pseudopilus. Forms homodimers. Interacts with XcpY/GspL. Interacts with XcpR/GspE and XcpS/GspF.

The protein resides in the cell inner membrane. In terms of biological role, inner membrane component of the type II secretion system required for the energy-dependent secretion of extracellular factors such as proteases and toxins from the periplasm. Plays a role in the complex assembly and recruits XcpY resulting in a stable complex in the inner membrane. Provides thus a link between the energy-providing XcpR protein in the cytoplasm and the rest of the T2SS machinery. In Pseudomonas aeruginosa (strain ATCC 15692 / DSM 22644 / CIP 104116 / JCM 14847 / LMG 12228 / 1C / PRS 101 / PAO1), this protein is Type II secretion system protein M (xcpZ).